Consider the following 510-residue polypeptide: Flavonoid 3',5'-hydroxylase (510 aa).

A heme-binding site is contributed by Cys-447.

The protein belongs to the cytochrome P450 family. The cofactor is heme.

It catalyses the reaction a 3',5'-unsubstituted flavanone + 2 reduced [NADPH--hemoprotein reductase] + 2 O2 = a 3',5'-dihydroxyflavanone + 2 oxidized [NADPH--hemoprotein reductase] + 2 H2O + 2 H(+). It functions in the pathway pigment biosynthesis; anthocyanin biosynthesis. In terms of biological role, catalyzes the 3'5'-hydroxylation of naringenin and eriodictyol to form 5,7,3,'4',5'-pentahydroxyflavanone and 3',5'-hydroxylation of dihydrokaempferol and dihydroquercetin to form dihydromyricetin. The sequence is that of Flavonoid 3',5'-hydroxylase (CYP75A7) from Eustoma exaltatum subsp. russellianum (Bluebells).